The following is a 597-amino-acid chain: Chaperonin 60 subunit beta 3, chloroplastic (597 aa).

The segment at 1 to 20 (MASTFSATSSMGSSLAPPSN) is disordered. The N-terminal 29 residues, 1–29 (MASTFSATSSMGSSLAPPSNRLSSFVSIS), are a transit peptide targeting the chloroplast. Serine 97 and serine 474 each carry phosphoserine. The stretch at 387–489 (STEEVVKKRV…KETLANDEEK (103 aa)) forms a coiled coil.

The protein belongs to the chaperonin (HSP60) family. In terms of assembly, part of the Cpn60 complex composed of 7 alpha and 7 beta subunits. Can also form a complex composed of 14 beta subunits only. Both complexes show ATPase activity. The Cpn60 complex interacts with the Cpn10 complex.

The protein resides in the plastid. The protein localises to the chloroplast. In terms of biological role, involved in protein assisted folding. This is Chaperonin 60 subunit beta 3, chloroplastic (CPN60B3) from Arabidopsis thaliana (Mouse-ear cress).